A 248-amino-acid polypeptide reads, in one-letter code: Ubiquinone/menaquinone biosynthesis C-methyltransferase UbiE (248 aa).

S-adenosyl-L-methionine-binding positions include serine 68, aspartate 92, and 120 to 121 (NA).

This sequence belongs to the class I-like SAM-binding methyltransferase superfamily. MenG/UbiE family.

It carries out the reaction a 2-demethylmenaquinol + S-adenosyl-L-methionine = a menaquinol + S-adenosyl-L-homocysteine + H(+). The catalysed reaction is a 2-methoxy-6-(all-trans-polyprenyl)benzene-1,4-diol + S-adenosyl-L-methionine = a 5-methoxy-2-methyl-3-(all-trans-polyprenyl)benzene-1,4-diol + S-adenosyl-L-homocysteine + H(+). It participates in quinol/quinone metabolism; menaquinone biosynthesis; menaquinol from 1,4-dihydroxy-2-naphthoate: step 2/2. The protein operates within cofactor biosynthesis; ubiquinone biosynthesis. Methyltransferase required for the conversion of demethylmenaquinol (DMKH2) to menaquinol (MKH2) and the conversion of 2-polyprenyl-6-methoxy-1,4-benzoquinol (DDMQH2) to 2-polyprenyl-3-methyl-6-methoxy-1,4-benzoquinol (DMQH2). In Rickettsia prowazekii (strain Madrid E), this protein is Ubiquinone/menaquinone biosynthesis C-methyltransferase UbiE.